Reading from the N-terminus, the 313-residue chain is Glycine--tRNA ligase alpha subunit (313 aa).

The protein belongs to the class-II aminoacyl-tRNA synthetase family. Tetramer of two alpha and two beta subunits.

It is found in the cytoplasm. It catalyses the reaction tRNA(Gly) + glycine + ATP = glycyl-tRNA(Gly) + AMP + diphosphate. This Leuconostoc mesenteroides subsp. mesenteroides (strain ATCC 8293 / DSM 20343 / BCRC 11652 / CCM 1803 / JCM 6124 / NCDO 523 / NBRC 100496 / NCIMB 8023 / NCTC 12954 / NRRL B-1118 / 37Y) protein is Glycine--tRNA ligase alpha subunit.